The chain runs to 337 residues: Integrase/recombinase (337 aa).

The Core-binding (CB) domain occupies 14–94 (VKVLDQLRER…ALLFFYGKVL (81 aa)). In terms of domain architecture, Tyr recombinase spans 112 to 328 (RLPVVLTPDE…GGAGVRSPLD (217 aa)). Active-site residues include Arg-146, Lys-171, His-277, Arg-280, and His-303. Catalysis depends on Tyr-312, which acts as the O-(3'-phospho-DNA)-tyrosine intermediate.

The protein belongs to the 'phage' integrase family.

Putative integrase believed to be involved in the insertion of antibiotic resistance genes into plasmids and transposons. The sequence is that of Integrase/recombinase (int) from Escherichia coli.